The chain runs to 299 residues: MKYSIPMKIPNQYQTNCLLKEITTFGIGGPAKYFVEVRTIPDMQKTLLFCYQNEIPYFILGKGSNSLFDDRGFNGLVIANRIDCLEKNEKGCWHVGAGYSFSLLGSQTARQGWEGLEFASGIPGSVGGAIFMNAGANGRETADNLISVDFVDEQGKLIHFKRSNLNFQYRTSPFQNIKGAIVSATFQLNASQEARQKQLSIIDYRKKTQPYKAKSAGCVFRNPNCGHAGALIEQAGLKETKIGGAAVSSVHANFIINSGLATSQDVLALIRLIQETVKAKTGAELESEIRYVPYDVNQG.

Residues 26–191 form the FAD-binding PCMH-type domain; it reads GIGGPAKYFV…VSATFQLNAS (166 aa). R170 is an active-site residue. C218 acts as the Proton donor in catalysis. E288 is an active-site residue.

It belongs to the MurB family. The cofactor is FAD.

The protein resides in the cytoplasm. It catalyses the reaction UDP-N-acetyl-alpha-D-muramate + NADP(+) = UDP-N-acetyl-3-O-(1-carboxyvinyl)-alpha-D-glucosamine + NADPH + H(+). The protein operates within cell wall biogenesis; peptidoglycan biosynthesis. Functionally, cell wall formation. The polypeptide is UDP-N-acetylenolpyruvoylglucosamine reductase (Protochlamydia amoebophila (strain UWE25)).